The chain runs to 345 residues: Putative [LysW]-L-2-aminoadipate/[LysW]-L-glutamate phosphate reductase (345 aa).

11–14 serves as a coordination point for NADP(+); the sequence is SGFT. The disordered stretch occupies residues 34–56; it reads TSRSKENKTIGHSHPNLRHSDLR. Cys146 is an active-site residue. Asn309 contacts NADP(+).

This sequence belongs to the NAGSA dehydrogenase family. Type 1 subfamily. LysY sub-subfamily.

It localises to the cytoplasm. The catalysed reaction is [amino-group carrier protein]-C-terminal-N-(1-carboxy-5-oxopentan-1-yl)-L-glutamine + phosphate + NADP(+) = [amino-group carrier protein]-C-terminal-N-(1-carboxy-5-phosphooxy-5-oxopentan-1-yl)-L-glutamine + NADPH + H(+). It catalyses the reaction [amino-group carrier protein]-C-terminal-gamma-(L-glutamyl-5-semialdehyde)-L-glutamate + phosphate + NADP(+) = [amino-group carrier protein]-C-terminal-gamma-(5-phospho-L-glutamyl)-L-glutamate + NADPH + H(+). It functions in the pathway amino-acid biosynthesis; L-lysine biosynthesis via AAA pathway; L-lysine from L-alpha-aminoadipate (Thermus route): step 3/5. It participates in amino-acid biosynthesis; L-arginine biosynthesis. Functionally, involved in both the arginine and lysine biosynthetic pathways. The sequence is that of Putative [LysW]-L-2-aminoadipate/[LysW]-L-glutamate phosphate reductase from Haloarcula marismortui (strain ATCC 43049 / DSM 3752 / JCM 8966 / VKM B-1809) (Halobacterium marismortui).